A 952-amino-acid chain; its full sequence is Probable outer membrane protein pmp16 (952 aa).

Residues 1–27 (MSKTPPKFLFYLGNFTACMFGMTPAVY) form the signal peptide. Residues 646–952 (GDLATTPLWQ…HLQAGSTLKF (307 aa)) enclose the Autotransporter domain.

It belongs to the PMP outer membrane protein family.

The protein localises to the secreted. The protein resides in the cell wall. Its subcellular location is the cell outer membrane. This is Probable outer membrane protein pmp16 (pmp16) from Chlamydia pneumoniae (Chlamydophila pneumoniae).